The chain runs to 384 residues: L-type lectin-like domain-containing protein C4F6.05c (384 aa).

The first 19 residues, 1 to 19 (MKFCSLFHVLSFCCTLAYA), serve as a signal peptide directing secretion. The L-type lectin-like domain maps to 20–224 (VPKSQFLQLH…DLVALSNLNI (205 aa)). At 20–353 (VPKSQFLQLH…AMGNAYSPYN (334 aa)) the chain is on the extracellular side. The disordered stretch occupies residues 227-251 (PDTSNNENLNPTSNTKQSVGDNTSP). Residues 354-374 (LTNFMVFLLLGAIVSYGIMLV) form a helical membrane-spanning segment. The Cytoplasmic segment spans residues 375–384 (RRDRRRHKYL).

It localises to the membrane. It is found in the endoplasmic reticulum. The protein localises to the golgi apparatus. This is L-type lectin-like domain-containing protein C4F6.05c from Schizosaccharomyces pombe (strain 972 / ATCC 24843) (Fission yeast).